The chain runs to 2210 residues: MDETVSELKDLVRKHIPNRHEFAHQKDAFLSHCHSGSLLQEGFKLLSNLVELESCESHACHLNTCQKYVDVILSDHGIPCPTLPKVIPDGFKLTGKTLILLETFVRVNPEEFERKWKSDMTKLLNLKQDLLRSGITLVPVVDGRTNYSNRFTPEWVVERIRWLLIEILRKSRSSAEIDIEDQEYQRLIHSLSNVRNQSLGFENIECLKRNLLEYDDRLAKSLFVGVKGDVRESVIREELMKLRLWYKKEVFDKNLGKFRITNRSELLNNLIRLGKHEDNTTSDCPFCVNKFMDIIYSLTFTALKRQDREKSNSELDQYVVCPHEKAYLGVLSICNKIKGLKVFNTRRNTLLFLDLIMVNFLDDLFTAKPEALDSLRRSGLILGQMVTLVNDRALDFLEAVKLIKKKIETNVKWVENCSKILRRSQQDIWSQISVWARYPDLSKLISIAQTISSDRPIMRYSAGGNFNTECKHKTFHMMSDAEQVEAFKILSSVSLSLINSMKTSFSSRLLINEKEYSRYFGNVRLRECYQQRFFLTDGLIVILFYQKTGERSGCYSIYTCEDGVLVEKGSFYCDPKRFFLPIFSQEVLVEMCDEMTTWLDFNSDLMVISKEKLRLLLLSILCAPSKRNQVFLQGLRYFLMAYSNQFHHVDLLSKLKVECMSGSEVIVQRLAVDLFQCLLGEGVDSDPYFARRFKYLLNVSYLCHLITKETPDRLTDQIKCFEKFIEPKIDFNCVIVNPSLNGQLTEAQEGMMLDGLDKFYSKTLKDCSDTKLPGVSNELLSYCISLFNKGKLKVTGELKNDPFKPNITSTALDLSSNKSVVVPKLDELGNVLSVYDREKMISSCVSSMAERFKTKGRYNIDPSTLDYLILKNLTGLVSIGSKTQRDCEELSMMFEGLTEEQAEAFNDIKNSVQLAMVKMKDSKSGDVNLSPNQKEGRVKSSTGTLEELWGPFGIMREIRTEVSLHEVKDFDPDVLASDLYKELCDVVYYSSSKPEYFLERPLEVCPLGLLLKNLTTSAYFDEEYFECFKYLLIQGHYDQKLGSYEHRSRSRLGFTNEALRVKDEVRLSMRESNSEAIADKLDRSYFTNAALRNLCFYSDDSPTEFTSISSNNGNLKFGLSYKEQVGSNRELYVGDLNTKLITRLVEDFAEAVGSSMRYTCLSSEKEFDRAICDMKLAVNNGDLSCSLDHSKWGPTMSPALFLTFLQFLELRTPKERNIINLEPVLNVLRWHLHKVIEVPVNVAEAYCTGNLKRSLGLMGCGSSSVGEEFFHQFMPVQGEIPSHIMSVLDMGQGILHNMSDLYGLITEQFLNYVLDLLYDVIPTSYTSSDDQVTLIKLPCASDDNQVNDEWLEMLCFHEYLSSKLNKFVSPKSVAGTFVAEFKSRFFVMGEETPLLTQFVAAALHNVKCKTPTQLSETIDTICDQCVANGVSVQIVSKISQRVNQLIKYSGFKETPFGAVEKQDVKDWVDGTRGYRLQRKIESIFSDDEMTGFIRSCAKRVFNDIKRGKVFEENLISLIGRDGDDALVGFLRYSSCSEQDIMRALGFRWVNLSSFGDLRLVLRTKLMTSRRVLEREEVPTLIKTLQSRLSRNFTKGVKKILAESINKSAFQSSVASGFIGFCKSIGSKCVRDGEGGFLYIKDIYTKVKPCLCEVCNMKRGVIYCRPSLEKIEKFSKPILWDYFSLVLTNACEIGEWVFSSVKEPQIPVVLSNRNLFWAVKPRIVRQLEDQLGMNHVLYSIRKNYPKLFDEHLSPFMSDLQVNRTLDGRKLKFLDVCIALDLMNENLGIVSHLLKARDNSVYIVKQSDCAMAHVRQSDYVDKEVGLSPQQVCYNFMVQIILSSMVNPLVMSTSCLKSFFWFNEVLELEDDGQIELGELTDFTFLVRDQKISRAMFIEDIAMGYVISNLEDVRLYIDKITIGEQPLAPGRHINDLLDLLGNFDDHEDCDLRFLIQVEHSRTSTKYRFKRKMTYSFSVTCVSKVIDLKEASVELQVVDVTQSVSGSGGSHLLLDGVSMIAGLPIFTGQGTFNMASLMMDADLVETNDNLILTDVRFSFGGFLSELSDKYAYTLNGPVDQGEPLVLRDGHFFMGTEKVSTYRVELTGDIIVKAIGALDDPEDVNALLNQLWPYLKSTAQVMLFQQEDFVLVYDLHRSGLIRSLELIGDWVEFVNFKVAYSKSLKDLVVSDNQGSLRLRGIMCRPLARRNTVEDIE.

The tract at residues 26–284 is endonuclease; the sequence is KDAFLSHCHS…KHEDNTTSDC (259 aa). Mn(2+) contacts are provided by Glu-51, Asp-89, and Glu-102. The active site involves Lys-115. The 197-residue stretch at 1172–1368 folds into the RdRp catalytic domain; the sequence is CDMKLAVNNG…YLSSKLNKFV (197 aa). A Mg(2+)-binding site is contributed by Asp-1330.

Belongs to the Bunyavirales RNA polymerase family. As to quaternary structure, homomultimer; the oligomeric structure is essential for the polymerase activity. Interacts with nucleoprotein N. Interacts with protein Z; this interaction inhibits viral transcription and replication, Z partially blocks the product exit tunnel for the releasing nascent RNA product. Mn(2+) is required as a cofactor. It depends on Mg(2+) as a cofactor.

Its subcellular location is the virion. The protein resides in the host cytoplasm. It carries out the reaction RNA(n) + a ribonucleoside 5'-triphosphate = RNA(n+1) + diphosphate. In terms of biological role, RNA-dependent RNA polymerase, which is responsible for the replication and transcription of the viral RNA genome using antigenomic RNA as an intermediate. During transcription, synthesizes subgenomic RNAs and assures their capping by a cap-snatching mechanism, which involves the endonuclease activity cleaving the host capped pre-mRNAs. These short capped RNAs are then used as primers for viral transcription. The 3'-end of subgenomic mRNAs molecules are heterogeneous and not polyadenylated. The replicase function is to direct synthesis of antigenomic and genomic RNA which are encapsidated and non capped. As a consequence of the use of the same enzyme for both transcription and replication, these mechanisms need to be well coordinated. These processes may be regulated by proteins N and Z in a dose-dependent manner. Z protein inhibits the viral polymerase L und thus the viral transcription and RNA synthesis. The protein is RNA-directed RNA polymerase L of Tacaribe virus (strain Franze-Fernandez) (TCRV).